Consider the following 430-residue polypeptide: MLDPNLLRNEPDAVAEKLARRGFKLDVDKLRALEERRKVLQVNTENLQAERNSRSKSIGQAKARGEDIEPLRLEVNKLGEELDAAKAELDTLLAEIRDIALTIPNLPADEVPVGKDENDNVEVSRWGTPREFDFEIRDHVTLGEMHSGLDFAAAVKLTGSRFVVMKGQIARMHRALSQFMLDLHTEQHGYSENYVPYLVNHDTLYGTGQLPKFAGDLFHTRPLEEEADSSNYALIPTAEVPLTNLVRDEIIDEDQLPIKMTAHTPCFRSEAGSYGRDTRGLIRMHQFDKVEMVQIVRPEDSMAALEEMTGHAEKVLQLLGLPYRKIILCTGDMGFGACKTYDLEVWVPAQNTYREISSCSNVWDFQARRMQARCRSKSDKKTRLVHTLNGSGLAVGRTLVAVMENYQQADGRIEVPEVLRPYMNGLEYIG.

237–239 (TAE) lines the L-serine pocket. 268-270 (RSE) lines the ATP pocket. Glutamate 291 contacts L-serine. Position 355–358 (355–358 (EISS)) interacts with ATP. Position 391 (serine 391) interacts with L-serine.

The protein belongs to the class-II aminoacyl-tRNA synthetase family. Type-1 seryl-tRNA synthetase subfamily. As to quaternary structure, homodimer. The tRNA molecule binds across the dimer.

Its subcellular location is the cytoplasm. It catalyses the reaction tRNA(Ser) + L-serine + ATP = L-seryl-tRNA(Ser) + AMP + diphosphate + H(+). The catalysed reaction is tRNA(Sec) + L-serine + ATP = L-seryl-tRNA(Sec) + AMP + diphosphate + H(+). It participates in aminoacyl-tRNA biosynthesis; selenocysteinyl-tRNA(Sec) biosynthesis; L-seryl-tRNA(Sec) from L-serine and tRNA(Sec): step 1/1. Its function is as follows. Catalyzes the attachment of serine to tRNA(Ser). Is also able to aminoacylate tRNA(Sec) with serine, to form the misacylated tRNA L-seryl-tRNA(Sec), which will be further converted into selenocysteinyl-tRNA(Sec). The polypeptide is Serine--tRNA ligase (Salmonella enteritidis PT4 (strain P125109)).